The chain runs to 639 residues: Actin assembly-inducing protein (639 aa).

The first 29 residues, 1-29, serve as a signal peptide directing secretion; it reads MGLNRFMRAMMVVFITANCITINPDIIFA. 4 disordered regions span residues 36–71, 132–212, 285–308, and 320–341; these read SSLN…SSRD, RRHP…QPFF, LGFN…TDEE, and LGFN…PPTE. Acidic residues predominate over residues 41-52; that stretch reads DEWEEEKTEEQP. A compositionally biased stretch (basic and acidic residues) spans 62-71; the sequence is ETAREVSSRD. Residues 190-210 are compositionally biased toward polar residues; the sequence is DSSMQSADESSPQPLKANQQP. Tandem repeats lie at residues 264–298 and 299–333. Residues 264–333 are 5 X approximate tandem repeats, Pro-rich; it reads DFPPPPTDEE…APATSEPSSF (70 aa). One copy of the 3; approximate repeat lies at 334-378; that stretch reads EFPPPPTEDELEIIRETASSLDSSFTRGDLASLRNAINRHSQNFS. The Cell attachment site motif lies at 360–362; it reads RGD. Disordered regions lie at residues 372–459 and 474–610; these read RHSQ…LSPK and KKTP…EPGN. Residues 379-417 form a 4; approximate repeat; that stretch reads DFPPIPTEEELNGRGGRPTSEEFSSLNSGDFTDDENSET. The segment covering 409–422 has biased composition (acidic residues); sequence FTDDENSETTEEEI. A 5; truncated repeat occupies 418–422; the sequence is TEEEI. A compositionally biased stretch (basic and acidic residues) spans 423 to 433; it reads DRLADLRDRGT. Low complexity-rich tracts occupy residues 450–459 and 490–509; these read SSPVPSLSPK and KKTT…TAPK. Basic and acidic residues-rich tracts occupy residues 553-572 and 588-609; these read EATE…KMVE and GIEE…EEPG. The chain crosses the membrane as a helical span at residues 613-633; that stretch reads TLILAMLAIGVFSLGAFIKII.

It is found in the cell membrane. In terms of biological role, virulence factor required for host cell microfilament interaction. It induces actin assembly around the bacteria to allow it to move within the cytoplasm. It is involved in the actin polymerization process. It seems to act as a nucleator that induces the reorganization of the actin cytoskeleton. The chain is Actin assembly-inducing protein (actA) from Listeria monocytogenes serovar 1/2a (strain ATCC BAA-679 / EGD-e).